The following is a 399-amino-acid chain: MIELDRLDLGGGRRLVITSEPDAAVPQVRDADGHWRRAGPGDGVAEAMLDALNQNPGTTKHGNFTLLSWASQTARGERPITVDQTNESVIVGDAAVVKWATHLQEGPHPAPARIKALRGNGFRGMPMPWGLVTWQTADHPETLVVTVDEYLPDAVDGWTWAVALVTDAAQDRAAVPALVDAVTAVGCVVAELHAAQADTARPATAADARSWREAALETVETAATLGTSVSGELLRARREDVEAVVGTLGDLAGIPVLAGHGDLHVGQVLRAGGRYVVTDFDGNPVLPAEARVKPVPAALDVAGMAQSLAHVAIVACKYTELAPAALADVDRLARTTFVGAYTDRLETLGHRSVYDPAPLRALRLQQVLREIIYAARHLPRWMYVPDAALPALLDEGTST.

ATP contacts are provided by residues Lys-98, 149 to 151, and Asp-156; that span reads EYL. Residue Asp-262 participates in D-glucosamine binding. Gln-267, Asp-279, and Asp-281 together coordinate Mg(2+). Positions 366–381 match the Substrate specificity determinant motif motif; it reads QVLREIIYAARHLPRW. Residue Glu-370 participates in D-glucosamine binding.

Belongs to the actinobacterial glucosamine kinase family. In terms of assembly, monomer. Requires Mg(2+) as cofactor.

It catalyses the reaction D-glucosamine + ATP = D-glucosamine 6-phosphate + ADP + H(+). Catalyzes the ATP-dependent phosphorylation of D-glucosamine (GlcN) to D-glucosamine 6-phosphate. May be involved in the phosphorylation of acquired extracellular GlcN derived from the hydrolysis of chitosan, i.e., in the incorporation of exogenous GlcN into the bacterial GlcNAc metabolism. Is unable to phosphorylate maltose. This chain is Glucosamine kinase, found in Mycolicibacterium smegmatis (strain ATCC 700084 / mc(2)155) (Mycobacterium smegmatis).